Reading from the N-terminus, the 874-residue chain is Leucine--tRNA ligase (874 aa).

The 'HIGH' region signature appears at 47-57; the sequence is PYPSGKLHMGH. Residues 636-640 carry the 'KMSKS' region motif; sequence KMSKS. Lys-639 is a binding site for ATP.

Belongs to the class-I aminoacyl-tRNA synthetase family.

The protein resides in the cytoplasm. It catalyses the reaction tRNA(Leu) + L-leucine + ATP = L-leucyl-tRNA(Leu) + AMP + diphosphate. The polypeptide is Leucine--tRNA ligase (Acinetobacter baumannii (strain SDF)).